A 289-amino-acid chain; its full sequence is uncharacterized protein (289 aa).

Residue glutamate 48 is part of the active site.

It belongs to the PhzF family.

This is an uncharacterized protein from Pasteurella multocida (strain Pm70).